The primary structure comprises 715 residues: Polyribonucleotide nucleotidyltransferase (715 aa).

Positions 497 and 503 each coordinate Mg(2+). In terms of domain architecture, KH spans 564 to 623 (PRLLTMKIDPEQIGLVIGPGGKTIKSITEQTGSKIDIADDGTVTIAAIQAKKAERARDLI). Positions 633–701 (GEVYLGRVTR…NKGRLNLTRL (69 aa)) constitute an S1 motif domain.

It belongs to the polyribonucleotide nucleotidyltransferase family. Mg(2+) is required as a cofactor.

The protein localises to the cytoplasm. The enzyme catalyses RNA(n+1) + phosphate = RNA(n) + a ribonucleoside 5'-diphosphate. Involved in mRNA degradation. Catalyzes the phosphorolysis of single-stranded polyribonucleotides processively in the 3'- to 5'-direction. The chain is Polyribonucleotide nucleotidyltransferase from Crocosphaera subtropica (strain ATCC 51142 / BH68) (Cyanothece sp. (strain ATCC 51142)).